Consider the following 80-residue polypeptide: Small ribosomal subunit protein bS18 (80 aa).

It belongs to the bacterial ribosomal protein bS18 family. In terms of assembly, part of the 30S ribosomal subunit. Forms a tight heterodimer with protein bS6.

Its function is as follows. Binds as a heterodimer with protein bS6 to the central domain of the 16S rRNA, where it helps stabilize the platform of the 30S subunit. This Methylocella silvestris (strain DSM 15510 / CIP 108128 / LMG 27833 / NCIMB 13906 / BL2) protein is Small ribosomal subunit protein bS18.